We begin with the raw amino-acid sequence, 1597 residues long: Pentafunctional AROM polypeptide (1597 aa).

The segment at 1 to 384 is 3-dehydroquinate synthase; it reads MGVPTKISIL…HEPRASTVSN (384 aa). NAD(+) contacts are provided by residues 44 to 46, 81 to 84, 114 to 116, and Asp-119; these read DTN, ESSK, and GGV. Arg-130 contributes to the 7-phospho-2-dehydro-3-deoxy-D-arabino-heptonate binding site. 139-140 is an NAD(+) binding site; the sequence is TT. The 7-phospho-2-dehydro-3-deoxy-D-arabino-heptonate site is built by Asp-146 and Lys-152. Lys-161 provides a ligand contact to NAD(+). Asn-162 provides a ligand contact to 7-phospho-2-dehydro-3-deoxy-D-arabino-heptonate. NAD(+)-binding positions include 179–182 and Asn-190; that span reads FLNT. Residue Glu-194 coordinates Zn(2+). Residues 194 to 197 and Lys-250 each bind 7-phospho-2-dehydro-3-deoxy-D-arabino-heptonate; that span reads EVIK. The Proton acceptor; for 3-dehydroquinate synthase activity role is filled by Glu-260. 7-phospho-2-dehydro-3-deoxy-D-arabino-heptonate contacts are provided by residues 264-268 and His-271; that span reads RNLLN. Residue His-271 coordinates Zn(2+). His-275 acts as the Proton acceptor; for 3-dehydroquinate synthase activity in catalysis. 2 residues coordinate 7-phospho-2-dehydro-3-deoxy-D-arabino-heptonate: His-287 and Lys-356. His-287 contributes to the Zn(2+) binding site. The interval 397–842 is EPSP synthase; that stretch reads VSPGVPKNLN…WDSLAQTFKV (446 aa). Catalysis depends on Cys-824, which acts as the For EPSP synthase activity. The interval 866-1057 is shikimate kinase; sequence ASIFIIGMRG…RSKENTFFVS (192 aa). An ATP-binding site is contributed by 872-879; that stretch reads GMRGAGKT. Residues 1058–1278 form a 3-dehydroquinase region; the sequence is LTLPDLAPAA…AAPGQLSARE (221 aa). The Proton acceptor; for 3-dehydroquinate dehydratase activity role is filled by His-1181. The active-site Schiff-base intermediate with substrate; for 3-dehydroquinate dehydratase activity is the Lys-1209. The shikimate dehydrogenase stretch occupies residues 1291 to 1597; the sequence is SKKFAVIGNP…VQPKDDDIST (307 aa).

This sequence in the N-terminal section; belongs to the sugar phosphate cyclases superfamily. Dehydroquinate synthase family. The protein in the 2nd section; belongs to the EPSP synthase family. It in the 3rd section; belongs to the shikimate kinase family. In the 4th section; belongs to the type-I 3-dehydroquinase family. This sequence in the C-terminal section; belongs to the shikimate dehydrogenase family. In terms of assembly, homodimer. Zn(2+) serves as cofactor.

It is found in the cytoplasm. The enzyme catalyses 7-phospho-2-dehydro-3-deoxy-D-arabino-heptonate = 3-dehydroquinate + phosphate. It carries out the reaction 3-dehydroquinate = 3-dehydroshikimate + H2O. It catalyses the reaction shikimate + NADP(+) = 3-dehydroshikimate + NADPH + H(+). The catalysed reaction is shikimate + ATP = 3-phosphoshikimate + ADP + H(+). The enzyme catalyses 3-phosphoshikimate + phosphoenolpyruvate = 5-O-(1-carboxyvinyl)-3-phosphoshikimate + phosphate. It functions in the pathway metabolic intermediate biosynthesis; chorismate biosynthesis; chorismate from D-erythrose 4-phosphate and phosphoenolpyruvate: step 2/7. Its pathway is metabolic intermediate biosynthesis; chorismate biosynthesis; chorismate from D-erythrose 4-phosphate and phosphoenolpyruvate: step 3/7. The protein operates within metabolic intermediate biosynthesis; chorismate biosynthesis; chorismate from D-erythrose 4-phosphate and phosphoenolpyruvate: step 4/7. It participates in metabolic intermediate biosynthesis; chorismate biosynthesis; chorismate from D-erythrose 4-phosphate and phosphoenolpyruvate: step 5/7. It functions in the pathway metabolic intermediate biosynthesis; chorismate biosynthesis; chorismate from D-erythrose 4-phosphate and phosphoenolpyruvate: step 6/7. The AROM polypeptide catalyzes 5 consecutive enzymatic reactions in prechorismate polyaromatic amino acid biosynthesis. The chain is Pentafunctional AROM polypeptide from Ajellomyces dermatitidis (strain ER-3 / ATCC MYA-2586) (Blastomyces dermatitidis).